The chain runs to 718 residues: Ribosomal RNA large subunit methyltransferase K/L (718 aa).

The region spanning aspartate 44–leucine 155 is the THUMP domain.

This sequence belongs to the methyltransferase superfamily. RlmKL family.

Its subcellular location is the cytoplasm. It catalyses the reaction guanosine(2445) in 23S rRNA + S-adenosyl-L-methionine = N(2)-methylguanosine(2445) in 23S rRNA + S-adenosyl-L-homocysteine + H(+). The catalysed reaction is guanosine(2069) in 23S rRNA + S-adenosyl-L-methionine = N(2)-methylguanosine(2069) in 23S rRNA + S-adenosyl-L-homocysteine + H(+). Functionally, specifically methylates the guanine in position 2445 (m2G2445) and the guanine in position 2069 (m7G2069) of 23S rRNA. The protein is Ribosomal RNA large subunit methyltransferase K/L of Francisella philomiragia subsp. philomiragia (strain ATCC 25017 / CCUG 19701 / FSC 153 / O#319-036).